A 460-amino-acid chain; its full sequence is Cysteine--tRNA ligase (460 aa).

Zn(2+) is bound at residue Cys-28. Positions 30 to 40 (MTVYDYCHLGH) match the 'HIGH' region motif. Residues Cys-209, His-234, and Glu-238 each contribute to the Zn(2+) site. The 'KMSKS' region motif lies at 266–270 (KMSKS). Residue Lys-269 participates in ATP binding.

This sequence belongs to the class-I aminoacyl-tRNA synthetase family. As to quaternary structure, monomer. It depends on Zn(2+) as a cofactor.

The protein localises to the cytoplasm. It carries out the reaction tRNA(Cys) + L-cysteine + ATP = L-cysteinyl-tRNA(Cys) + AMP + diphosphate. This is Cysteine--tRNA ligase from Thioalkalivibrio sulfidiphilus (strain HL-EbGR7).